The chain runs to 308 residues: Flavonol synthase 3 (308 aa).

In terms of domain architecture, Fe2OG dioxygenase spans 167-267 (TIEYLMKINY…RISWPVFVES (101 aa)). 175 to 177 (NYY) contacts 2-oxoglutarate. Fe cation is bound by residues His-192, Asp-194, and His-248. 2-oxoglutarate is bound at residue 258-260 (RIS).

This sequence belongs to the iron/ascorbate-dependent oxidoreductase family. Fe(2+) is required as a cofactor. Widely expressed at low levels.

The enzyme catalyses a (2R,3R)-dihydroflavonol + 2-oxoglutarate + O2 = a flavonol + succinate + CO2 + H2O. The protein operates within secondary metabolite biosynthesis; flavonoid biosynthesis. Catalyzes the formation of flavonols from dihydroflavonols. Possesses low activity in vitro towards dihydrokaempferol and dihydroquercetin producing kaempferol and quercitin, respectively. The sequence is that of Flavonol synthase 3 from Arabidopsis thaliana (Mouse-ear cress).